We begin with the raw amino-acid sequence, 290 residues long: Diaminopimelate epimerase (290 aa).

Positions 11 and 78 each coordinate substrate. The active-site Proton donor is the Cys-87. Substrate-binding positions include 88-89 (GN), Asn-163, Asn-199, and 217-218 (ER). The active-site Proton acceptor is Cys-226. 227-228 (GT) lines the substrate pocket.

The protein belongs to the diaminopimelate epimerase family. As to quaternary structure, homodimer.

It localises to the cytoplasm. It catalyses the reaction (2S,6S)-2,6-diaminopimelate = meso-2,6-diaminopimelate. It functions in the pathway amino-acid biosynthesis; L-lysine biosynthesis via DAP pathway; DL-2,6-diaminopimelate from LL-2,6-diaminopimelate: step 1/1. In terms of biological role, catalyzes the stereoinversion of LL-2,6-diaminopimelate (L,L-DAP) to meso-diaminopimelate (meso-DAP), a precursor of L-lysine and an essential component of the bacterial peptidoglycan. In Mycobacterium ulcerans (strain Agy99), this protein is Diaminopimelate epimerase.